Consider the following 315-residue polypeptide: Methionyl-tRNA formyltransferase (315 aa).

The interval 2 to 189 (SDSLRIIFAG…LITTLKQLAD (188 aa)) is N-terminal domain. Residue 113-116 (SLLP) coordinates (6S)-5,6,7,8-tetrahydrofolate. Residues 210–315 (KEEARIDWSL…EWFIPGNRLA (106 aa)) form a C-terminal domain region.

The protein belongs to the Fmt family.

The enzyme catalyses L-methionyl-tRNA(fMet) + (6R)-10-formyltetrahydrofolate = N-formyl-L-methionyl-tRNA(fMet) + (6S)-5,6,7,8-tetrahydrofolate + H(+). Its function is as follows. Attaches a formyl group to the free amino group of methionyl-tRNA(fMet). The formyl group appears to play a dual role in the initiator identity of N-formylmethionyl-tRNA by promoting its recognition by IF2 and preventing the misappropriation of this tRNA by the elongation apparatus. This is Methionyl-tRNA formyltransferase from Salmonella typhi.